The following is a 398-amino-acid chain: Protein RecA (398 aa).

Residue 83–90 (GPESSGKT) participates in ATP binding. The segment at 351–398 (AGQKNDKKSKLEEKANAGAGISEASEPDSSAEEDFEEFAPIDIGSLGE) is disordered. The segment covering 354–365 (KNDKKSKLEEKA) has biased composition (basic and acidic residues). The segment covering 375–389 (SEPDSSAEEDFEEFA) has biased composition (acidic residues).

Belongs to the RecA family.

The protein resides in the cytoplasm. Its function is as follows. Can catalyze the hydrolysis of ATP in the presence of single-stranded DNA, the ATP-dependent uptake of single-stranded DNA by duplex DNA, and the ATP-dependent hybridization of homologous single-stranded DNAs. It interacts with LexA causing its activation and leading to its autocatalytic cleavage. In Ruminococcus albus (strain ATCC 27210 / DSM 20455 / JCM 14654 / NCDO 2250 / 7), this protein is Protein RecA.